The following is a 306-amino-acid chain: 5'-hydroxyaverantin dehydrogenase (306 aa).

5 residues coordinate NADP(+): serine 25, isoleucine 27, glutamine 48, lysine 52, and aspartate 73. Residue serine 173 is the Proton donor of the active site. Residues tyrosine 187, lysine 191, valine 220, and threonine 222 each contribute to the NADP(+) site. Tyrosine 187 acts as the Proton acceptor in catalysis. Lysine 191 acts as the Lowers pKa of active site Tyr in catalysis.

The protein belongs to the short-chain dehydrogenases/reductases (SDR) family. Homodimer.

The protein localises to the cytoplasm. Its subcellular location is the cytosol. The catalysed reaction is (1'S,5'S)-5'-hydroxyaverantin + NAD(+) = (S)-5'-oxoaverantin + NADH + H(+). The enzyme catalyses (1'S,5'R)-5'-hydroxyaverantin + NAD(+) = (S)-5'-oxoaverantin + NADH + 2 H(+). Its pathway is mycotoxin biosynthesis. In terms of biological role, 5'-hydroxyaverantin dehydrogenase; part of the fragmented gene cluster that mediates the biosynthesis of dothistromin (DOTH), a polyketide toxin very similar in structure to the aflatoxin precursor, versicolorin B. The first step of the pathway is the conversion of acetate to norsolorinic acid (NOR) and requires the fatty acid synthase subunits hexA and hexB, as well as the polyketide synthase pksA. PksA combines a hexanoyl starter unit and 7 malonyl-CoA extender units to synthesize the precursor NOR. The hexanoyl starter unit is provided to the acyl-carrier protein (ACP) domain by the fungal fatty acid synthase hexA/hexB. The second step is the conversion of NOR to averantin (AVN) and requires the norsolorinic acid ketoreductase nor1, which catalyzes the dehydration of norsolorinic acid to form (1'S)-averantin. The cytochrome P450 monooxygenase avnA then catalyzes the hydroxylation of AVN to 5'hydroxyaverantin (HAVN). The next step is performed by adhA that transforms HAVN to averufin (AVF). Averufin might then be converted to hydroxyversicolorone by cypX and avfA. Hydroxyversicolorone is further converted versiconal hemiacetal acetate (VHA) by moxY. VHA is then the substrate for the versiconal hemiacetal acetate esterase est1 to yield versiconal (VAL). Versicolorin B synthase vbsA then converts VAL to versicolorin B (VERB) by closing the bisfuran ring. Then, the activity of the versicolorin B desaturase verB leads to versicolorin A (VERA). DotB, a predicted chloroperoxidase, may perform epoxidation of the A-ring of VERA. Alternatively, a cytochrome P450, such as cypX or avnA could catalyze this step. It is also possible that another, uncharacterized, cytochrome P450 enzyme is responsible for this step. Opening of the epoxide could potentially be achieved by the epoxide hydrolase epoA. However, epoA seems not to be required for DOTH biosynthesis, but other epoxide hydrolases may have the ability to complement this hydrolysis. Alternatively, opening of the epoxide ring could be achieved non-enzymatically. The next step is the deoxygenation of ring A to yield the 5,8-dihydroxyanthraquinone which is most likely catalyzed by the NADPH dehydrogenase encoded by ver1. The last stages of DOTH biosynthesis are proposed to involve hydroxylation of the bisfuran. OrdB and norB might have oxidative roles here. An alternative possibility is that cytochrome P450 monoogenases such as avnA and cypX might perform these steps in addition to previously proposed steps. The chain is 5'-hydroxyaverantin dehydrogenase from Dothistroma septosporum (strain NZE10 / CBS 128990) (Red band needle blight fungus).